Here is a 37-residue protein sequence, read N- to C-terminus: MVEPLLSGIVLGLIPITLFGLLVAAYLQYQRGNQLGL.

Residues 5-25 traverse the membrane as a helical segment; it reads LLSGIVLGLIPITLFGLLVAA.

It belongs to the PetG family. The 4 large subunits of the cytochrome b6-f complex are cytochrome b6, subunit IV (17 kDa polypeptide, PetD), cytochrome f and the Rieske protein, while the 4 small subunits are PetG, PetL, PetM and PetN. The complex functions as a dimer.

Its subcellular location is the plastid. It localises to the chloroplast thylakoid membrane. Functionally, component of the cytochrome b6-f complex, which mediates electron transfer between photosystem II (PSII) and photosystem I (PSI), cyclic electron flow around PSI, and state transitions. PetG is required for either the stability or assembly of the cytochrome b6-f complex. This Pyropia yezoensis (Susabi-nori) protein is Cytochrome b6-f complex subunit 5.